A 680-amino-acid chain; its full sequence is Methionine--tRNA ligase (680 aa).

Residues 15–25 (PYANGPVHIGH) carry the 'HIGH' region motif. Residues cysteine 147, cysteine 150, cysteine 160, and cysteine 163 each contribute to the Zn(2+) site. A 'KMSKS' region motif is present at residues 332–336 (KISTS). Residue threonine 335 participates in ATP binding. The region spanning 578–680 (EFEKLDIRVG…REVKPGSEVK (103 aa)) is the tRNA-binding domain.

Belongs to the class-I aminoacyl-tRNA synthetase family. MetG type 1 subfamily. As to quaternary structure, homodimer. The cofactor is Zn(2+).

The protein localises to the cytoplasm. The enzyme catalyses tRNA(Met) + L-methionine + ATP = L-methionyl-tRNA(Met) + AMP + diphosphate. In terms of biological role, is required not only for elongation of protein synthesis but also for the initiation of all mRNA translation through initiator tRNA(fMet) aminoacylation. This Phocaeicola vulgatus (strain ATCC 8482 / DSM 1447 / JCM 5826 / CCUG 4940 / NBRC 14291 / NCTC 11154) (Bacteroides vulgatus) protein is Methionine--tRNA ligase.